Reading from the N-terminus, the 414-residue chain is tRNA N6-adenosine threonylcarbamoyltransferase, mitochondrial (414 aa).

A mitochondrion-targeting transit peptide spans 1-29 (MLMLSKTAGAIPRPPRSNVRGFIRRFNVQ). Residues K74 and K140 each carry the N6-acetyllysine modification. Positions 147 and 151 each coordinate a divalent metal cation. Substrate is bound by residues 169-173 (LISGG) and D202. Residue K203 is modified to N6-acetyllysine. G222 and E226 together coordinate substrate. N6-acetyllysine is present on residues K230 and K299. Substrate is bound by residues 329-330 (SN) and T357. D358 is a binding site for a divalent metal cation.

Belongs to the KAE1 / TsaD family. As to quaternary structure, monomer. Requires a divalent metal cation as cofactor.

The protein resides in the mitochondrion. The enzyme catalyses L-threonylcarbamoyladenylate + adenosine(37) in tRNA = N(6)-L-threonylcarbamoyladenosine(37) in tRNA + AMP + H(+). In terms of biological role, required for the formation of a threonylcarbamoyl group on adenosine at position 37 (t(6)A37) in mitochondrial tRNAs that read codons beginning with adenine. Probably involved in the transfer of the threonylcarbamoyl moiety of threonylcarbamoyl-AMP (TC-AMP) to the N6 group of A37. Involved in mitochondrial genome maintenance. This is tRNA N6-adenosine threonylcarbamoyltransferase, mitochondrial from Rattus norvegicus (Rat).